The primary structure comprises 306 residues: Transcription factor MYBS1 (306 aa).

The Myb-like domain maps to 18–73 (WTREDDKAFENALAACAAPPPADGGAPDDDWFAALAASVPGARSAEEVRRHYEALV). A Nuclear export signal 1 motif is present at residues 72–86 (LVEDVAAIDAGRVPL). The segment at 89-142 (YAGEESAAPPDGAGAAAAASKDGGHRRDERKGGGGGYDGGKSCSKAEQERRKGI) is disordered. The span at 92–109 (EESAAPPDGAGAAAAASK) shows a compositional bias: low complexity. Composition is skewed to basic and acidic residues over residues 110–120 (DGGHRRDERKG) and 132–142 (SKAEQERRKGI). A Nuclear localization signal 1 motif is present at residues 133–140 (KAEQERRK). The HTH myb-type domain occupies 136-192 (QERRKGIPWTEEEHRLFLLGLDKFGKGDWRSISRNFVISRTPTQVASHAQKYFIRLN). Residues 164-188 (WRSISRNFVISRTPTQVASHAQKYF) constitute a DNA-binding region (H-T-H motif). Positions 196 to 200 (RDRRR) match the Nuclear localization signal 2 motif. A Nuclear export signal 2 motif is present at residues 203–215 (IHDITSVTAGDQV). Residues 228-241 (ATGNPAAAALGPPG) are compositionally biased toward low complexity. The tract at residues 228 to 255 (ATGNPAAAALGPPGMKHHHHHHPGGAPP) is disordered.

In terms of assembly, homodimer. Interacts with GAMYB. As to expression, expressed in aboveground tissues, with the highest level in leaves.

It is found in the nucleus. The protein resides in the cytoplasm. Transcription activator that binds to 5'-TATCCA-3' elements in gene promoters. Derepresses strongly the sugar-repressed transcription of promoters containing SRS or 5'-TATCCA-3' elements. Functions with GAMYB to integrate diverse nutrient starvation and gibberellin (GA) signaling pathways during germination of grains. Sugar, nitrogen and phosphate starvation signals converge and interconnect with GA to promote the co-nuclear import of MYBS1 and GAMYB, resulting in the expression of a large set of GA-inducible hydrolases, transporters, and regulators that are essential for mobilization of nutrient reserves in the endosperm to support seedling growth. The polypeptide is Transcription factor MYBS1 (Oryza sativa subsp. japonica (Rice)).